A 418-amino-acid chain; its full sequence is Voltage-gated ClC-type chloride channel ClcB (418 aa).

10 consecutive transmembrane segments (helical) span residues 5–25 (LLIATVVGILAAFAVAGFRHA), 54–74 (LLTPALGGLAAGLLLMGWQKF), 146–166 (LWIACGAAAGMAAAYRAPLAG), 168–188 (LFIAEVLFGTMMLASLGPVII), 222–242 (ALIISTGVLAGLCGPLLLTLM), 258–278 (WQLALGGLIVGLLSLFTPAVW), 291–311 (APPLLMIIAGIFLCKLCAVLA), 316–336 (GAPGGVFTPTLFIGLAIGMLY), 352–372 (LLLGLTGMATLLAATTHAPIM), and 380–400 (MTGEYQLLPGLLIACVIASVI).

Belongs to the chloride channel (TC 2.A.49) family. ClcB subfamily.

It is found in the cell inner membrane. Probably acts as an electrical shunt for an outwardly-directed proton pump that is linked to amino acid decarboxylation, as part of the extreme acid resistance (XAR) response. This chain is Voltage-gated ClC-type chloride channel ClcB, found in Escherichia coli O127:H6 (strain E2348/69 / EPEC).